The chain runs to 203 residues: Guanylate kinase (203 aa).

A Guanylate kinase-like domain is found at 5–183 (GVLYIISAPS…AVEELKSVVV (179 aa)). Residue 12–19 (APSGAGKT) coordinates ATP.

It belongs to the guanylate kinase family.

It localises to the cytoplasm. It catalyses the reaction GMP + ATP = GDP + ADP. Essential for recycling GMP and indirectly, cGMP. The chain is Guanylate kinase from Geobacter metallireducens (strain ATCC 53774 / DSM 7210 / GS-15).